The primary structure comprises 410 residues: Cytohesin-2 (410 aa).

Residues 13 to 56 (PEERMELENIRRRKQELLVEIQRLREELSEAMSEVEGLEANEGS) adopt a coiled-coil conformation. Residues 54–241 (EGSKTLQRNR…RNLYDSIRNE (188 aa)) form the SEC7 domain. Residues 259 to 386 (NPDREGWLLK…WIKSIQAAVS (128 aa)) enclose the PH domain. Residues 268–271 (KLGA), Arg-290, Tyr-301, Arg-311, Lys-349, Asn-360, and His-361 each bind a 1,2-diacyl-sn-glycero-3-phospho-(1D-myo-inositol-3,4,5-trisphosphate). Positions 397–405 (RKKRISVKK) are C-terminal autoinhibitory region.

Heteromer. Composed of TAMALIN, CYTH2 and at least one GRM1. Interacts with ARRB1. Interacts with ARL4D; the interaction is direct. Directly interacts with CCDC120 through the coiled coil domain; this interaction stabilizes CCDC120, possibly by preventing its ubiquitination, and is required for neurite growth in neuroblastoma cells. Interacts (via N-terminal domain) with INAVA (via N-terminal domain).

Its subcellular location is the cell membrane. The protein resides in the cytoplasm. The protein localises to the cell projection. It is found in the growth cone. Functionally, acts as a guanine-nucleotide exchange factor (GEF). Promotes guanine-nucleotide exchange on ARF1, ARF3 and ARF6. Promotes the activation of ARF factors through replacement of GDP with GTP. The cell membrane form, in association with ARL4 proteins, recruits ARF6 to the plasma membrane. Involved in neurite growth. The polypeptide is Cytohesin-2 (CYTH2) (Bos taurus (Bovine)).